The chain runs to 568 residues: T-complex protein 1 subunit theta (568 aa).

K15 is covalently cross-linked (Glycyl lysine isopeptide (Lys-Gly) (interchain with G-Cter in ubiquitin)). The residue at position 505 (S505) is a Phosphoserine.

This sequence belongs to the TCP-1 chaperonin family. Heterooligomeric complex of about 850 to 900 kDa that forms two stacked rings, 12 to 16 nm in diameter.

The protein localises to the cytoplasm. Molecular chaperone; assists the folding of proteins upon ATP hydrolysis. Known to play a role, in vitro, in the folding of actin and tubulin. In yeast may play a role in mitotic spindle formation. The protein is T-complex protein 1 subunit theta (CCT8) of Saccharomyces cerevisiae (strain ATCC 204508 / S288c) (Baker's yeast).